The chain runs to 155 residues: CASP-like protein 5B2 (155 aa).

The Cytoplasmic portion of the chain corresponds to 1 to 18 (MWEVAWWRPGTWGGLAMR). The chain crosses the membrane as a helical span at residues 19-39 (VGQVAFAGASIGVMASGAGFA). Residue N40 is glycosylated (N-linked (GlcNAc...) asparagine). Residues 40-43 (NYTA) are Extracellular-facing. A helical transmembrane segment spans residues 44-64 (FCYLIASMGLQSLWSLGLACL). At 65–77 (DVYALTVKRDLNN) the chain is on the cytoplasmic side. The chain crosses the membrane as a helical span at residues 78 to 98 (ALLVSLFVIGDWVTALLSFAA). The Extracellular segment spans residues 99–128 (SCSAGGVMVLFKRDVLFCRRYPQLPCGRFE). A helical membrane pass occupies residues 129–149 (LAVALAFLSWALSATSAIIMF). The Cytoplasmic portion of the chain corresponds to 150 to 155 (CLLAAF).

This sequence belongs to the Casparian strip membrane proteins (CASP) family. Homodimer and heterodimers.

It localises to the cell membrane. In Oryza sativa subsp. indica (Rice), this protein is CASP-like protein 5B2.